The chain runs to 124 residues: uncharacterized protein (124 aa).

Interacts with dil1.

This is an uncharacterized protein from Schizosaccharomyces pombe (strain 972 / ATCC 24843) (Fission yeast).